A 198-amino-acid polypeptide reads, in one-letter code: Probable GTP-binding protein EngB (198 aa).

Residues 22 to 196 (NLSEIAFVGR…WNWIKGQAEL (175 aa)) form the EngB-type G domain. GTP is bound by residues 30–37 (GRSNVGKS), 57–61 (GKTQT), 75–78 (DVPG), 142–145 (TKAD), and 175–177 (FSA). S37 and T59 together coordinate Mg(2+).

Belongs to the TRAFAC class TrmE-Era-EngA-EngB-Septin-like GTPase superfamily. EngB GTPase family. Mg(2+) is required as a cofactor.

In terms of biological role, necessary for normal cell division and for the maintenance of normal septation. The sequence is that of Probable GTP-binding protein EngB from Oenococcus oeni (strain ATCC BAA-331 / PSU-1).